The following is a 265-amino-acid chain: Putative carbamate hydrolase RutD (265 aa).

One can recognise an AB hydrolase-1 domain in the interval 14-123 (PTLVLSSGLG…WSSPNPHSAR (110 aa)).

Belongs to the AB hydrolase superfamily. Hydrolase RutD family.

The catalysed reaction is carbamate + 2 H(+) = NH4(+) + CO2. Its function is as follows. Involved in pyrimidine catabolism. May facilitate the hydrolysis of carbamate, a reaction that can also occur spontaneously. This Stutzerimonas stutzeri (strain A1501) (Pseudomonas stutzeri) protein is Putative carbamate hydrolase RutD.